The primary structure comprises 343 residues: Heat-inducible transcription repressor HrcA (343 aa).

The protein belongs to the HrcA family.

Functionally, negative regulator of class I heat shock genes (grpE-dnaK-dnaJ and groELS operons). Prevents heat-shock induction of these operons. The polypeptide is Heat-inducible transcription repressor HrcA (Clostridium botulinum (strain Alaska E43 / Type E3)).